A 971-amino-acid chain; its full sequence is Exportin-2 (971 aa).

Positions 29–102 constitute an Importin N-terminal domain; that stretch reads AEKYLESVEG…KSSIINLMLR (74 aa).

The protein belongs to the XPO2/CSE1 family.

It is found in the cytoplasm. The protein resides in the nucleus. In terms of biological role, export receptor for importin alpha. Mediates importin-alpha re-export from the nucleus to the cytoplasm after import substrates have been released into the nucleoplasm. The polypeptide is Exportin-2 (cse1l) (Xenopus laevis (African clawed frog)).